The following is a 554-amino-acid chain: Arginine--tRNA ligase (554 aa).

Residues 129 to 139 (ANPTGPLHIGH) carry the 'HIGH' region motif.

The protein belongs to the class-I aminoacyl-tRNA synthetase family. Monomer.

The protein localises to the cytoplasm. It carries out the reaction tRNA(Arg) + L-arginine + ATP = L-arginyl-tRNA(Arg) + AMP + diphosphate. This is Arginine--tRNA ligase from Geobacter sp. (strain M21).